The primary structure comprises 153 residues: Histone H2B.6 (153 aa).

Composition is skewed to basic and acidic residues over residues 1 to 28 (MAPK…EKAP) and 36 to 53 (EKRL…EGKK). The disordered stretch occupies residues 1–60 (MAPKAEKKPAAKKPAEEEPAAEKAEKAPAGKKPKAEKRLPAGKGEKGSGEGKKAGRKKGK). N6-acetyllysine is present on residues Lys7 and Lys37. Lys149 is covalently cross-linked (Glycyl lysine isopeptide (Lys-Gly) (interchain with G-Cter in ubiquitin)).

Belongs to the histone H2B family. The nucleosome is a histone octamer containing two molecules each of H2A, H2B, H3 and H4 assembled in one H3-H4 heterotetramer and two H2A-H2B heterodimers. The octamer wraps approximately 147 bp of DNA. Can be acetylated to form H2BK6ac and H2BK33ac. Post-translationally, monoubiquitinated by BRE1 to form H2BK143ub1 and deubiquitinated by UBP26. Required for heterochromatic histone H3 di- and trimethylation at H3K4me. May give a specific tag for epigenetic transcriptional activation.

The protein resides in the nucleus. The protein localises to the chromosome. In terms of biological role, core component of nucleosome. Nucleosomes wrap and compact DNA into chromatin, limiting DNA accessibility to the cellular machineries which require DNA as a template. Histones thereby play a central role in transcription regulation, DNA repair, DNA replication and chromosomal stability. DNA accessibility is regulated via a complex set of post-translational modifications of histones, also called histone code, and nucleosome remodeling. The sequence is that of Histone H2B.6 (H2B.6) from Oryza sativa subsp. indica (Rice).